Here is a 314-residue protein sequence, read N- to C-terminus: MKHLLSIADLTRESAVELLDEAERFEQALLGREVRKLPTLRGRTVMTVFFENSTRTRVSFEVAGKWMSADVINVSASSSSVSKGESLRDTAMTLRAAGADALIVRHPASGAAHQIAKWTGHQDDGGPAVINAGDGTHEHPTQALLDALTLRQRLGDIEGKRIAIVGDILHSRVARSNALLLSMLGAEVVLVAPPTLLPVGVSAWPVSVAHSLDAELPGLDAVLMLRVQAERMNGGFFPSQREYSINYGLSEKRLALLPDHAVVLHPGPMLRGMEIASAVADSTRTAVLQQVTNGVHMRMAVLFRLLVGAEEVAG.

Carbamoyl phosphate contacts are provided by R55 and T56. Residue K83 coordinates L-aspartate. 3 residues coordinate carbamoyl phosphate: R105, H139, and Q142. Residues R172 and R226 each contribute to the L-aspartate site. Positions 267 and 268 each coordinate carbamoyl phosphate.

Belongs to the aspartate/ornithine carbamoyltransferase superfamily. ATCase family. Heterododecamer (2C3:3R2) of six catalytic PyrB chains organized as two trimers (C3), and six regulatory PyrI chains organized as three dimers (R2).

It catalyses the reaction carbamoyl phosphate + L-aspartate = N-carbamoyl-L-aspartate + phosphate + H(+). Its pathway is pyrimidine metabolism; UMP biosynthesis via de novo pathway; (S)-dihydroorotate from bicarbonate: step 2/3. Its function is as follows. Catalyzes the condensation of carbamoyl phosphate and aspartate to form carbamoyl aspartate and inorganic phosphate, the committed step in the de novo pyrimidine nucleotide biosynthesis pathway. This Rhodococcus jostii (strain RHA1) protein is Aspartate carbamoyltransferase catalytic subunit.